Reading from the N-terminus, the 446-residue chain is Light-independent protochlorophyllide reductase subunit N (446 aa).

The [4Fe-4S] cluster site is built by cysteine 22, cysteine 47, and cysteine 107.

The protein belongs to the BchN/ChlN family. As to quaternary structure, protochlorophyllide reductase is composed of three subunits; ChlL, ChlN and ChlB. Forms a heterotetramer of two ChlB and two ChlN subunits. The cofactor is [4Fe-4S] cluster.

Its subcellular location is the plastid. It localises to the chloroplast. It catalyses the reaction chlorophyllide a + oxidized 2[4Fe-4S]-[ferredoxin] + 2 ADP + 2 phosphate = protochlorophyllide a + reduced 2[4Fe-4S]-[ferredoxin] + 2 ATP + 2 H2O. The protein operates within porphyrin-containing compound metabolism; chlorophyll biosynthesis (light-independent). In terms of biological role, component of the dark-operative protochlorophyllide reductase (DPOR) that uses Mg-ATP and reduced ferredoxin to reduce ring D of protochlorophyllide (Pchlide) to form chlorophyllide a (Chlide). This reaction is light-independent. The NB-protein (ChlN-ChlB) is the catalytic component of the complex. The chain is Light-independent protochlorophyllide reductase subunit N from Mesostigma viride (Green alga).